The primary structure comprises 302 residues: Mas-related G-protein coupled receptor member A3 (302 aa).

The Extracellular portion of the chain corresponds to 1-17 (MNETIPGSIDIETLIPD). The N-linked (GlcNAc...) asparagine glycan is linked to Asn-2. A helical membrane pass occupies residues 18–38 (LMIIIFGLVGLTGNAIVFWLL). Residues 39-46 (GFRMHRTA) lie on the Cytoplasmic side of the membrane. The helical transmembrane segment at 47–67 (FLVYILNLALADFLFLLCHII) threads the bilayer. An N-linked (GlcNAc...) asparagine glycan is attached at Asn-68. Over 68–81 (NSTVDLLKFTLPKG) the chain is Extracellular. A helical transmembrane segment spans residues 82–102 (IFAFCFHTIKRVLYITGLSML). Residues 103–129 (SAISTERCLSVLCPIWYHCRRPEHTST) lie on the Cytoplasmic side of the membrane. The helical transmembrane segment at 130–150 (VMCAVIWVLSLLICILDGYFC) threads the bilayer. At 151–167 (GYLDNHYFNYSVCQAWD) the chain is on the extracellular side. Asn-159 carries an N-linked (GlcNAc...) asparagine glycan. Residues 168 to 188 (IFIGAYLMFLFVVLCLSTLAL) form a helical membrane-spanning segment. Residues 189-211 (LARLFCGARNMKFTRLFVTIMLT) lie on the Cytoplasmic side of the membrane. Residues 212–232 (VLVFLLCGLPWGITWFLLFWI) form a helical membrane-spanning segment. Residues 233-242 (APGVFVLDYS) are Extracellular-facing. A helical transmembrane segment spans residues 243–263 (PLLVLTAINSCANPIIYFFVG). The Cytoplasmic segment spans residues 264–302 (SFRQRLNKQTLKMVLQKALQDTPETPENMVEMSRNKAEP).

It belongs to the G-protein coupled receptor 1 family. Mas subfamily. As to expression, expressed exclusively in dorsal root ganglia and nodose ganglia. Expressed in a subset of sensory neurons that includes nociceptors. Expressed in the subclass of non-peptidergic sensory neurons that are IB4(+) and VR1(-).

It is found in the cell membrane. In terms of biological role, orphan receptor. May be a receptor for RFamide-family neuropeptides such as NPFF and NPAF, which are analgesic in vivo. May regulate nociceptor function and/or development, including the sensation or modulation of pain. Activated by the antimalarial drug chloroquine. Mediates chloroquine-induced itch, in a histamine-independent manner. The sequence is that of Mas-related G-protein coupled receptor member A3 (Mrgpra3) from Mus musculus (Mouse).